Reading from the N-terminus, the 514-residue chain is UDP-N-acetylmuramoyl-L-alanyl-D-glutamate--2,6-diaminopimelate ligase (514 aa).

Threonine 37 lines the UDP-N-acetyl-alpha-D-muramoyl-L-alanyl-D-glutamate pocket. 125 to 131 (GTNGKTS) serves as a coordination point for ATP. UDP-N-acetyl-alpha-D-muramoyl-L-alanyl-D-glutamate is bound by residues 167-168 (TT), serine 194, glutamine 200, and arginine 202. Lysine 234 carries the post-translational modification N6-carboxylysine. Residues arginine 406, 430-433 (DNPR), glycine 481, and glutamate 485 contribute to the meso-2,6-diaminopimelate site. Residues 430–433 (DNPR) carry the Meso-diaminopimelate recognition motif motif.

The protein belongs to the MurCDEF family. MurE subfamily. Requires Mg(2+) as cofactor. Post-translationally, carboxylation is probably crucial for Mg(2+) binding and, consequently, for the gamma-phosphate positioning of ATP.

The protein resides in the cytoplasm. The catalysed reaction is UDP-N-acetyl-alpha-D-muramoyl-L-alanyl-D-glutamate + meso-2,6-diaminopimelate + ATP = UDP-N-acetyl-alpha-D-muramoyl-L-alanyl-gamma-D-glutamyl-meso-2,6-diaminopimelate + ADP + phosphate + H(+). It functions in the pathway cell wall biogenesis; peptidoglycan biosynthesis. Catalyzes the addition of meso-diaminopimelic acid to the nucleotide precursor UDP-N-acetylmuramoyl-L-alanyl-D-glutamate (UMAG) in the biosynthesis of bacterial cell-wall peptidoglycan. This is UDP-N-acetylmuramoyl-L-alanyl-D-glutamate--2,6-diaminopimelate ligase from Ralstonia nicotianae (strain ATCC BAA-1114 / GMI1000) (Ralstonia solanacearum).